A 290-amino-acid polypeptide reads, in one-letter code: Concanavalin-A (290 aa).

The first 29 residues, 1 to 29 (MAISKKSSLFLPIFTFITMFLMVVNKVSS), serve as a signal peptide directing secretion. Aspartate 119 and arginine 139 together coordinate a carbohydrate. A Ca(2+)-binding site is contributed by aspartate 119. The propeptide occupies 149-163 (VIRNSTTIDFNAAYN). Asparagine 152 carries an N-linked (GlcNAc...) asparagine glycan. The Mn(2+) site is built by glutamate 171 and aspartate 173. Ca(2+)-binding residues include aspartate 173, tyrosine 175, asparagine 177, and aspartate 182. 2 residues coordinate Mn(2+): aspartate 182 and histidine 187. A carbohydrate is bound at residue 262–263 (LY). Residues 282–290 (EIPDIATVV) constitute a propeptide that is removed on maturation.

This sequence belongs to the leguminous lectin family. In terms of assembly, homotetramer. The mature chain consists of residues 164-281 followed by 30-148. To form a mature chain the precursor undergoes further post-translational modification after removal of the signal sequence; cleavage after Asn at positions Asn-148, Asn-163, and Asn-281 is followed by transposition and ligation (By formation of a new peptide bond) of residues 164-281 and 30-148.

Functionally, glucose/D-mannose/rhamnose specific lectin. Has hemagglutinating activity towards rabbit erythrocytes. Has mitogenic activity towards murine splenocytes that is inhibited by glucose. Inhibits HIV-1 reverse transcriptase with an IC(50) of 35 uM. Has a potent antiproliferative activity against L1210 leukemia cells in vitro that is not inhibited by glucose. Inhibits translation in cell-free rabbit reticulocyte system with an IC(50) of 2.08 uM. Lacks anti-fungal activity against M.arachidicola, B.cenera and F.oxysporum. The protein is Concanavalin-A of Canavalia gladiata (Sword bean).